The chain runs to 313 residues: Ribosomal RNA small subunit methyltransferase H (313 aa).

S-adenosyl-L-methionine-binding positions include 35–37, Asp55, Phe80, Asp102, and Gln109; that span reads GGH.

Belongs to the methyltransferase superfamily. RsmH family.

The protein resides in the cytoplasm. It catalyses the reaction cytidine(1402) in 16S rRNA + S-adenosyl-L-methionine = N(4)-methylcytidine(1402) in 16S rRNA + S-adenosyl-L-homocysteine + H(+). Specifically methylates the N4 position of cytidine in position 1402 (C1402) of 16S rRNA. The sequence is that of Ribosomal RNA small subunit methyltransferase H from Shewanella violacea (strain JCM 10179 / CIP 106290 / LMG 19151 / DSS12).